A 170-amino-acid polypeptide reads, in one-letter code: RNA pyrophosphohydrolase (170 aa).

A Nudix hydrolase domain is found at 6-150; that stretch reads GFRPNVGIIL…KRDVYRRALR (145 aa). Positions 39–60 match the Nudix box motif; that stretch reads GGINAHESPEQALYRELHEEVG.

Belongs to the Nudix hydrolase family. RppH subfamily. A divalent metal cation is required as a cofactor.

Functionally, accelerates the degradation of transcripts by removing pyrophosphate from the 5'-end of triphosphorylated RNA, leading to a more labile monophosphorylated state that can stimulate subsequent ribonuclease cleavage. In Cellvibrio japonicus (strain Ueda107) (Pseudomonas fluorescens subsp. cellulosa), this protein is RNA pyrophosphohydrolase.